The following is a 576-amino-acid chain: Nuclear receptor subfamily 1 group D member 2 (576 aa).

A required for phosphorylation by CSNK1E and cytoplasmic localization region spans residues 1-60 (MELNAGGVIAYISSSSSASSPASCHSEGSENSFQSSSSSVPSSPNSSNCDANGNPKNADI). Positions 1–99 (MELNAGGVIA…HSGMTKFSGM (99 aa)) are modulating. Over residues 13–47 (SSSSSASSPASCHSEGSENSFQSSSSSVPSSPNSS) the composition is skewed to low complexity. Positions 13 to 90 (SSSSSASSPA…TSAPGMTKSH (78 aa)) are disordered. At Ser-46 the chain carries Phosphoserine; by GSK3-beta. Residues 100 to 176 (VLLCKVCGDV…VGMSRDAVRF (77 aa)) constitute a DNA-binding region (nuclear receptor). 2 NR C4-type zinc fingers span residues 103–123 (CKVCGDVASGFHYGVHACEGC) and 140–164 (CLKNENCSIMRMNRNRCQQCRFKKC). N6-acetyllysine; by KAT5 is present on residues Lys-162 and Lys-163. Disordered stretches follow at residues 215-246 (QHDQSALPAQEQLRPKSQLEQENIKNTPSDFA) and 263-282 (LYNQEHRENSSESMPPQRGE). Composition is skewed to basic and acidic residues over residues 227-237 (LRPKSQLEQEN) and 263-272 (LYNQEHRENS). 2 disulfide bridges follow: Cys-334–Cys-340 and Cys-371–Cys-381. The NR LBD domain maps to 366–576 (RNSYLCNTGG…EELLAFKVHP (211 aa)). Residues Cys-381 and His-565 each coordinate heme. The interaction with ZNHIT1 stretch occupies residues 394-576 (SGHEIWEEFS…EELLAFKVHP (183 aa)).

Belongs to the nuclear hormone receptor family. NR1 subfamily. In terms of assembly, binds DNA as a monomer or a homodimer. Interacts with NCOA5 coactivator, leading to a strong increase of transcription of target genes. Interacts (via N-terminus) with KAT5. Interacts (via C-terminus) with HDAC1. Interacts with ZNHIT1. Interacts with SIAH2. In terms of processing, deacetylated by HDAC1. Acetylation and deacetylation regulate its transcriptional regulatory activity. Post-translationally, under more reducing intracellular redox conditions, Cys-381 is in its heme-bound state, which is optimal for recruitment of the NCOR1/HDAC3 corepressor complex and repression of target genes. When subjected to oxidative stress conditions, Cys-381 undergoes oxidation to form a disulfide bridge with Cys-371, also triggering a ligand switch that results in release of bound heme and derepression of target genes. Ubiquitinated by SIAH2; leading to its proteasomal degradation. In terms of processing, phosphorylated by CSNK1E; phosphorylation enhances its cytoplasmic localization. As to expression, ubiquitous. Expressed abundantly in skeletal muscle and brown adipose tissue. Expressed during skeletal muscle myogenesis.

The protein localises to the nucleus. Its subcellular location is the cytoplasm. With respect to regulation, the heme-bound form can bind gaseous signaling molecules such as CO and nitric oxide (NO) and NO can reverse its transcriptional repressor activity. Transcriptional repressor which coordinates circadian rhythm and metabolic pathways in a heme-dependent manner. Integral component of the complex transcription machinery that governs circadian rhythmicity and forms a critical negative limb of the circadian clock by directly repressing the expression of core clock components BMAL1 and CLOCK. Also regulates genes involved in metabolic functions, including lipid metabolism and the inflammatory response. Acts as a receptor for heme which stimulates its interaction with the NCOR1/HDAC3 corepressor complex, enhancing transcriptional repression. Recognizes two classes of DNA response elements within the promoter of its target genes and can bind to DNA as either monomers or homodimers, depending on the nature of the response element. Binds as a monomer to a response element composed of the consensus half-site motif 5'-[A/G]GGTCA-3' preceded by an A/T-rich 5' sequence (RevRE), or as a homodimer to a direct repeat of the core motif spaced by two nuclegotides (RevDR-2). Acts as a potent competitive repressor of ROR alpha (RORA) function and also negatively regulates the expression of NR1D1. Regulates lipid and energy homeostasis in the skeletal muscle via repression of genes involved in lipid metabolism and myogenesis including: CD36, FABP3, FABP4, UCP3, SCD1 and MSTN. Regulates hepatic lipid metabolism via the repression of APOC3. Represses gene expression at a distance in macrophages by inhibiting the transcription of enhancer-derived RNAs (eRNAs). In addition to its activity as a repressor, can also act as a transcriptional activator. Acts as a transcriptional activator of the sterol regulatory element-binding protein 1 (SREBF1) and the inflammatory mediator interleukin-6 (IL6) in the skeletal muscle. Plays a role in the regulation of circadian sleep/wake cycle; essential for maintaining wakefulness during the dark phase or active period. Key regulator of skeletal muscle mitochondrial function; negatively regulates the skeletal muscle expression of core clock genes and genes involved in mitochondrial biogenesis, fatty acid beta-oxidation and lipid metabolism. May play a role in the circadian control of neutrophilic inflammation in the lung. The polypeptide is Nuclear receptor subfamily 1 group D member 2 (Mus musculus (Mouse)).